The chain runs to 348 residues: D-erythrose-4-phosphate dehydrogenase (348 aa).

Residues 12-13 (RI) and Arg-81 contribute to the NAD(+) site. Residues 154-156 (SCT), Arg-200, 213-214 (TK), and Arg-236 each bind substrate. The active-site Nucleophile is the Cys-155. Residue Asn-318 participates in NAD(+) binding.

It belongs to the glyceraldehyde-3-phosphate dehydrogenase family. Epd subfamily. Homotetramer.

It localises to the cytoplasm. It carries out the reaction D-erythrose 4-phosphate + NAD(+) + H2O = 4-phospho-D-erythronate + NADH + 2 H(+). It functions in the pathway cofactor biosynthesis; pyridoxine 5'-phosphate biosynthesis; pyridoxine 5'-phosphate from D-erythrose 4-phosphate: step 1/5. Functionally, catalyzes the NAD-dependent conversion of D-erythrose 4-phosphate to 4-phosphoerythronate. The sequence is that of D-erythrose-4-phosphate dehydrogenase from Salmonella dublin (strain CT_02021853).